Here is a 1508-residue protein sequence, read N- to C-terminus: MEPTAKGRTEESFSYVIRAPSSEGFDIMNVDVKIDTSWIFQDMEDSAEERECLQEEAAGRPDMDMGALRRQLESSEQKLSAAEDKYVTSESGLRSRIQELELSERKLLRKVDQLSTHVAQERSAWLQAQEKLAALQGELASQIREESVARRQQWRLRRLQERLRRKDEALGQQAAALERCRRTQRRQLGLVREQERVLREQVQRLERNVRRLCRAAGLLLAQWDTAAPGSQGATEAAAELRALQARAERSEREREEAARSLQEHRATERQLRGQLEELRCCIYGLKLSEIGLQGQVEDLAQQNQCLREELGAQAPIGHCSLDALGCVQGDSLPLPREEALDPCRSQDWRNSLRSNDAPRQRAPAGQSPEGPCTWSRIRPGRASSVLAPGPETTSELPRDLAGSNREQLTLAEPSLDEQILLLVCGCPPEECLDESLLRMDLAWISENLAADPAAEAFLLVQTSALPLWGPAGDSASWRPLLLQEVPSDGQKIQEELATRSPPPPKATGHPGWDCHQTRGRGASLFHEAPYISNHPFLKKHPKDLKDTWNNGGGSLAGRTEEGKARGTLGRKGKNLGDKYQLSQESHQNLSLENGAGAAEDVQDQNGASETKAATCRPGSWQEFLMPLLQGEASVSKEGPESLSRRERVEGYVWGLRGGLSSENEEVAPPATFSRAHETKEPWPTDSQLLAGKVRATGRTARGKEENQVWLGNALLLQGGSLEDKGLEEEDEMPHQEASGLGCRGAPEEPDSQEHESKEMLFFAGETGLPLFPRFALSVEGAEPTDHGHPQAVSKGHNRCALTIDELAQDVEACFQQLSTLQPGSRGWQCSASACRGENWSFAQKWHSGWERAHSQQVWGNWGICSNEEAKSKESGEGDKPGKTTALGTSEVPGNPGTLPHWDEASPNPPQGPAEPWGALERVRSRFHQLISGLKKQRSQILHDNTKLHGDQERFHERVCALEREREREVTKISRLERDNHRLVGDISQLKKELDQYLQAISDLEDCNGKSYCKILELEEENETLKGNLGQLQKATSESVRKSKDTMEQVTLENWKLQTLISELGVSYKELIKDIVLGIEDMIRALSGENEHLLRRVHVLEREVTLQRSTDQGRLVRGREHLQGKAKMHALDKEVQVTPLTGQLLSRACGPPLEEEMSLAAGQTGPSTGTGNSRRGADSPPPSLVWRNTGVANALQGNVSGAEVKEAHLEKEEKRPRCSVAQGQALSSLSNGPMLRDSEAEVTEEDPRLRAQQLHHRVLTLQCQLRDQGAAHQASLDEATRLQEELQAKLEELQKKQHEAKLAVTPLKAKIASLVRKCRERNRLITHLLQELHRHGLGNLLLSELAQNMLNDVALAEYTATFLAPGVPETSHHLDVKSEMTAALRAQTYLLNPEMDSVLQSSLSSESWPIPEPEWPAQTAQLDSLKLPLSLVSTLDPGTCLAAVTVEPGLPAQRLQEKGGMPCPALQVDNVPAPSELLSPARILAFHQELRQSICSNSQVHKSPLELEM.

Residues 149–267 (ARRQQWRLRR…ARSLQEHRAT (119 aa)) adopt a coiled-coil conformation. Disordered regions lie at residues 248 to 268 (ERSEREREEAARSLQEHRATE), 345 to 403 (SQDW…LAGS), 536 to 575 (FLKKHPKDLKDTWNNGGGSLAGRTEEGKARGTLGRKGKNL), 725 to 754 (GLEEEDEMPHQEASGLGCRGAPEEPDSQEH), and 868 to 916 (EAKS…AEPW). Residues 868-881 (EAKSKESGEGDKPG) show a composition bias toward basic and acidic residues. Residues 972–1034 (ISRLERDNHR…KGNLGQLQKA (63 aa)) are a coiled coil. Disordered stretches follow at residues 1158-1186 (LAAGQTGPSTGTGNSRRGADSPPPSLVWR) and 1204-1246 (KEAH…EEDP). Over residues 1163–1172 (TGPSTGTGNS) the composition is skewed to polar residues. Positions 1204-1215 (KEAHLEKEEKRP) are enriched in basic and acidic residues. Polar residues predominate over residues 1220-1230 (AQGQALSSLSN). A coiled-coil region spans residues 1271-1302 (HQASLDEATRLQEELQAKLEELQKKQHEAKLA).

This is an uncharacterized protein from Homo sapiens (Human).